A 1068-amino-acid chain; its full sequence is Disheveled-associated activator of morphogenesis 2 (1068 aa).

The GBD/FH3 domain maps to 40–416 (SPIPNAEELN…QIVLQDERGV (377 aa)). Residues 434–516 (MLINENEVKQ…LVAQLSELST (83 aa)) are a coiled coil. A disordered region spans residues 514–586 (LSTGPVSSPP…MGLPLPQDPY (73 aa)). An FH1 domain is found at 518–594 (PVSSPPPPGG…PYPSSDVPLR (77 aa)). Residues 540 to 572 (LPPPPPPLPFACCPPPPPPPLPPGGPPTPPGAP) are compositionally biased toward pro residues. In terms of domain architecture, FH2 spans 595–994 (KKRVPQPSHP…EERRARMEAM (400 aa)). Ser1015 carries the phosphoserine modification. Positions 1016–1048 (SLEEGGEFDDLVSALRSGEVFDKDLCKLKRSRK) constitute a DAD domain.

This sequence belongs to the formin homology family. As to quaternary structure, interacts with DVL3. Interacts with INF2. Expressed in most tissues examined. Expressed in kidney glomeruli.

Key regulator of the Wnt signaling pathway, which is required for various processes during development, such as dorsal patterning, determination of left/right symmetry or myelination in the central nervous system. Acts downstream of Wnt ligands and upstream of beta-catenin (CTNNB1). Required for canonical Wnt signaling pathway during patterning in the dorsal spinal cord by promoting the aggregation of Disheveled (Dvl) complexes, thereby clustering and formation of Wnt receptor signalosomes and potentiating Wnt activity. During dorsal patterning of the spinal cord, inhibits oligodendrocytes differentiation via interaction with PIP5K1A. Also regulates non-canonical Wnt signaling pathway. Acts downstream of PITX2 in the developing gut and is required for left/right asymmetry within dorsal mesentery: affects mesenchymal condensation by lengthening cadherin-based junctions through WNT5A and non-canonical Wnt signaling, inducing polarized condensation in the left dorsal mesentery necessary to initiate gut rotation. Together with DAAM1, required for myocardial maturation and sarcomere assembly. Is a regulator of actin nucleation and elongation, filopodia formation and podocyte migration. This Homo sapiens (Human) protein is Disheveled-associated activator of morphogenesis 2.